Reading from the N-terminus, the 340-residue chain is Fructose-bisphosphate aldolase (340 aa).

Ser-53 is a binding site for D-glyceraldehyde 3-phosphate. Asp-95 functions as the Proton donor in the catalytic mechanism. His-96, Asp-131, Glu-161, and His-212 together coordinate Zn(2+). Gly-213 is a dihydroxyacetone phosphate binding site. A Zn(2+)-binding site is contributed by His-249. Dihydroxyacetone phosphate is bound by residues 250–252 and 271–274; these read GGS and NLDT.

It belongs to the class II fructose-bisphosphate aldolase family. The cofactor is Zn(2+).

It carries out the reaction beta-D-fructose 1,6-bisphosphate = D-glyceraldehyde 3-phosphate + dihydroxyacetone phosphate. Its pathway is carbohydrate degradation; glycolysis; D-glyceraldehyde 3-phosphate and glycerone phosphate from D-glucose: step 4/4. Functionally, catalyzes the aldol condensation of dihydroxyacetone phosphate (DHAP or glycerone-phosphate) with glyceraldehyde 3-phosphate (G3P) to form fructose 1,6-bisphosphate (FBP) in gluconeogenesis and the reverse reaction in glycolysis. The chain is Fructose-bisphosphate aldolase (fba) from Streptomyces galbus.